The chain runs to 412 residues: Putative membrane protein 337L (412 aa).

Residues N171, N186, N247, and N271 are each glycosylated (N-linked (GlcNAc...) asparagine; by host). Residues 387-407 (VLITGIAVTGVAVLLFLLLMF) traverse the membrane as a helical segment.

The protein belongs to the IIV-6 337L family.

It localises to the virion membrane. The sequence is that of Putative membrane protein 337L from Acheta domesticus (House cricket).